A 209-amino-acid polypeptide reads, in one-letter code: Redox-sensing transcriptional repressor Rex (209 aa).

A DNA-binding region (H-T-H motif) is located at residues 16–55; it reads LYYRFIQNLSLSGKQRVSSAELSEAVKVDSATIRRDFSYF. NAD(+) is bound at residue 90-95; sequence GVGNLG.

The protein belongs to the transcriptional regulatory Rex family. In terms of assembly, homodimer.

The protein localises to the cytoplasm. Functionally, modulates transcription in response to changes in cellular NADH/NAD(+) redox state. This chain is Redox-sensing transcriptional repressor Rex, found in Bacillus cereus (strain G9842).